The chain runs to 405 residues: Aurora kinase A (405 aa).

Polar residues-rich tracts occupy residues 32–82 and 91–110; these read VPSQ…QLQA and RSLNNTQKSEQPSSSAPGNN. Residues 32-127 are disordered; that stretch reads VPSQNPLSAN…KQKNEESKKR (96 aa). S42 and S52 each carry phosphoserine. The segment covering 111–127 has biased composition (basic and acidic residues); that stretch reads SEKELATKQKNEESKKR. The region spanning 134 to 384 is the Protein kinase domain; it reads FEIGRPLGKG…LKDVLEHPWI (251 aa). ATP contacts are provided by residues K144, K163, and 212–214; that span reads EYA. D257 (proton acceptor) is an active-site residue. A Glycyl lysine isopeptide (Lys-Gly) (interchain with G-Cter in SUMO2) cross-link involves residue K259. ATP contacts are provided by residues 261 to 262 and D275; that span reads EN. Residues 281-294 are activation segment; the sequence is HAPSSRRTTLCGTL. Phosphothreonine is present on residues T288 and T289. Phosphoserine is present on S343. The interval 385-405 is disordered; the sequence is MANSSKPSSSQKSKDSTSKQS. Residues 396-405 are compositionally biased toward basic and acidic residues; sequence KSKDSTSKQS.

Belongs to the protein kinase superfamily. Ser/Thr protein kinase family. Aurora subfamily. Part of a complex composed of NEDD9, AURKA and CTTN; within the complex NEDD9 acts as a scaffold protein and is required for complex formation. Identified in a complex with AUNIP and NIN. Interacts with FBXL7. Interacts with CPEB1, JTB, TACC1, TPX2, PPP2CA, as well as with the protein phosphatase type 1 (PP1) isoforms PPP1CA, PPP1CB and PPP1CC. Also interacts with its substrates ARHGEF2, BORA, KIF2A, PARD3, and p53/TP53. Interaction with BORA promotes phosphorylation of PLK1. Interacts with CIMAP3. Interacts with GADD45A, competing with its oligomerization. Interacts (via C-terminus) with AUNIP (via C-terminus). Interacts with FRY; this interaction facilitates AURKA-mediated PLK1 phosphorylation. Interacts with SIRT2. Interacts with MYCN; interaction is phospho-independent and triggers AURKA activation; AURKA competes with FBXW7 for binding to unphosphorylated MYCN but not for binding to phosphorylated MYCN. Interacts with HNRNPU. Interacts with AAAS. Interacts with KLHL18 and CUL3. Interacts with FOXP1. Interacts with HDAC6; AURKA-mediated phosphorylation of HDAC6 promotes deacetylation of alpha-tubulin. Activated by phosphorylation at Thr-289; this brings about a change in the conformation of the activation segment. Phosphorylation at Thr-289 varies during the cell cycle and is highest during M phase. Autophosphorylated at Thr-289 upon TPX2 binding. Thr-289 can be phosphorylated by several kinases, including PAK and PKA. Protein phosphatase type 1 (PP1) binds AURKA and inhibits its activity by dephosphorylating Thr-289 during mitosis. Phosphorylation at Ser-343 decreases the kinase activity. PPP2CA controls degradation by dephosphorylating Ser-52 at the end of mitosis. Post-translationally, ubiquitinated by the E3 ubiquitin-protein ligase complex SCF(FBXL7) during mitosis, leading to its degradation by the proteasome. Ubiquitinated by CHFR, leading to its degradation by the proteasome. Ubiquitinated by the anaphase-promoting complex (APC), leading to its degradation by the proteasome. Ubiquitinated by the CUL3-KLHL18 ligase leading to its activation at the centrosome which is required for initiating mitotic entry. Ubiquitination mediated by CUL3-KLHL18 ligase does not lead to its degradation by the proteasome.

It localises to the cytoplasm. The protein resides in the cytoskeleton. Its subcellular location is the microtubule organizing center. The protein localises to the centrosome. It is found in the spindle pole. It localises to the centriole. The protein resides in the cell projection. Its subcellular location is the neuron projection. The protein localises to the cilium. It is found in the cilium basal body. It localises to the basolateral cell membrane. The catalysed reaction is L-seryl-[protein] + ATP = O-phospho-L-seryl-[protein] + ADP + H(+). It catalyses the reaction L-threonyl-[protein] + ATP = O-phospho-L-threonyl-[protein] + ADP + H(+). With respect to regulation, activation of CDK1, appears to be an upstream event of AURKA activation. Phosphatase inhibitor-2 (PPP1R2) and TPX2 act also as activators. Inactivated by the G2 checkpoint. Inhibited by GADD45A and p53/TP53, and through dephosphorylation by protein phosphatase type 1 (PP1). MLN8054 is also a potent and selective inhibitor. Activated during the early phase of cilia disassembly in the presence of CIMAP3. Inhibited by the small molecule inhibitor VX-680. Functionally, mitotic serine/threonine kinase that contributes to the regulation of cell cycle progression. Associates with the centrosome and the spindle microtubules during mitosis and plays a critical role in various mitotic events including the establishment of mitotic spindle, centrosome duplication, centrosome separation as well as maturation, chromosomal alignment, spindle assembly checkpoint, and cytokinesis. Required for normal spindle positioning during mitosis and for the localization of NUMA1 and DCTN1 to the cell cortex during metaphase. Required for initial activation of CDK1 at centrosomes. Phosphorylates numerous target proteins, including ARHGEF2, BORA, BRCA1, CDC25B, DLGP5, HDAC6, KIF2A, LATS2, NDEL1, PARD3, PPP1R2, PLK1, RASSF1, TACC3, p53/TP53 and TPX2. Phosphorylates MCRS1 which is required for MCRS1-mediated kinetochore fiber assembly and mitotic progression. Regulates KIF2A tubulin depolymerase activity. Important for microtubule formation and/or stabilization. Required for normal axon formation. Plays a role in microtubule remodeling during neurite extension. Also acts as a key regulatory component of the p53/TP53 pathway, and particularly the checkpoint-response pathways critical for oncogenic transformation of cells, by phosphorylating and destabilizing p53/TP53. Phosphorylates its own inhibitors, the protein phosphatase type 1 (PP1) isoforms, to inhibit their activity. Inhibits cilia outgrowth. Required for cilia disassembly via phosphorylation of HDAC6 and subsequent deacetylation of alpha-tubulin. Regulates protein levels of the anti-apoptosis protein BIRC5 by suppressing the expression of the SCF(FBXL7) E3 ubiquitin-protein ligase substrate adapter FBXL7 through the phosphorylation of the transcription factor FOXP1. In Canis lupus familiaris (Dog), this protein is Aurora kinase A.